The sequence spans 444 residues: Forkhead box protein F2 (444 aa).

The segment at Pro32–Pro98 is disordered. Residues Ala34–Ser75 are compositionally biased toward low complexity. Residues Ala76–Gly87 show a composition bias toward gly residues. Residues Glu99–Arg190 constitute a DNA-binding region (fork-head). Disordered stretches follow at residues Gly256 to Met323 and Ala338 to Leu367. Over residues Ala263–Pro274 the composition is skewed to basic residues. A compositionally biased stretch (gly residues) spans Gly293–Tyr308. Residues Gly309–Met323 show a composition bias toward low complexity.

Interacts with the transcription factors TBP and TFIIB. Lung and placenta. Predominantly expressed in gastrointestinal tract including stomach.

The protein resides in the nucleus. In terms of biological role, probable transcription activator for a number of lung-specific genes. Mediates up-regulation of the E3 ligase IRF2BPL and drives ubiquitination and degradation of CTNNB1. The sequence is that of Forkhead box protein F2 (FOXF2) from Homo sapiens (Human).